The chain runs to 217 residues: RNA chaperone ProQ (217 aa).

Residues 105-166 (EAKARVQAQR…PREEQHTPVS (62 aa)) form a disordered region. The segment covering 121 to 131 (KRERKPRPTTP) has biased composition (basic residues). Positions 132-162 (RRKEGAERKPRAQKPVEKAPKTVKAPREEQH) are enriched in basic and acidic residues.

The protein belongs to the ProQ family.

It localises to the cytoplasm. RNA chaperone with significant RNA binding, RNA strand exchange and RNA duplexing activities. May regulate ProP activity through an RNA-based, post-transcriptional mechanism. In Escherichia coli O8 (strain IAI1), this protein is RNA chaperone ProQ.